The chain runs to 272 residues: Short-chain dehydrogenase/reductase iacC (272 aa).

Residues Ile-13, Asp-59, and Asn-88 each contribute to the NADP(+) site. Catalysis depends on proton donor residues Ser-150 and Tyr-169. The NADP(+) site is built by Tyr-169, Lys-173, and Val-202. The Lowers pKa of active site Tyr role is filled by Lys-173.

The protein belongs to the short-chain dehydrogenases/reductases (SDR) family.

The protein operates within secondary metabolite biosynthesis. Its function is as follows. Short-chain dehydrogenase/reductase; part of the gene cluster that mediates the biosynthesis of iso-A82775C, a enylepoxycyclohexane and biosynthetic precursor of the chloropestolide anticancer natural products. Within the cluster, the prenyltransferase iacE prenylates siccayne to generate pestalodiol E, using dimethylallyl diphosphate (DMAPP) as cosubstrate. The probable oxidoreductase iacF is then involved in the epoxidation of pestalodiol F to pestalodiol F, which is further converted to pestalofone A by the short-chain dehydrogenase/reductase iacG. Iso-A82775C is subsequently generated from pestalofone A by the short-chain dehydrogenase/reductase iacC. Iso-A82775C is further condensed with maldoxin via a Diels-Alder reaction to produce the anticancer natural products chloropestolides A to E. This Pestalotiopsis fici (strain W106-1 / CGMCC3.15140) protein is Short-chain dehydrogenase/reductase iacC.